The chain runs to 152 residues: Small ribosomal subunit protein uS15 (152 aa).

A compositionally biased stretch (basic residues) spans Met-1–Lys-11. The interval Met-1 to Trp-25 is disordered.

It belongs to the universal ribosomal protein uS15 family. Part of the 30S ribosomal subunit.

The sequence is that of Small ribosomal subunit protein uS15 from Methanoregula boonei (strain DSM 21154 / JCM 14090 / 6A8).